The sequence spans 244 residues: Mannose-binding protein C (244 aa).

The signal sequence occupies residues 1-18; the sequence is MSLFTSFLLLCVLTAVYA. The region spanning 38–96 is the Collagen-like domain; sequence GLNGFPGKDGHDGAKGEKGEPGQGLRGLQGPPGKVGPAGPPGNPGSKGATGPKGDRGES. P43 is modified (4-hydroxyproline). Positions 43–99 are disordered; sequence PGKDGHDGAKGEKGEPGQGLRGLQGPPGKVGPAGPPGNPGSKGATGPKGDRGESVEF. The segment covering 45-57 has biased composition (basic and acidic residues); that stretch reads KDGHDGAKGEKGE. P58, P69, P78, and P81 each carry 4-hydroxyproline. Positions 65 to 74 are enriched in low complexity; the sequence is LQGPPGKVGP. A coiled-coil region spans residues 108-126; it reads IAALRSELRAMRKWVLLSM. A C-type lectin domain is found at 129–241; the sequence is NVGKKYFMSS…CSDSFLVVCE (113 aa). Cystine bridges form between C151–C240 and C218–C232.

In terms of assembly, oligomeric complex of 3 or more homotrimers. Interacts with MASP1 and MASP2. Interacts with MEP1A and MEP1B and may inhibit their catalytic activity.

It is found in the secreted. Functionally, calcium-dependent lectin involved in innate immune defense. Binds mannose, fucose and N-acetylglucosamine on different microorganisms and activates the lectin complement pathway. Binds to late apoptotic cells, as well as to apoptotic blebs and to necrotic cells, but not to early apoptotic cells, facilitating their uptake by macrophages. The chain is Mannose-binding protein C (Mbl2) from Rattus norvegicus (Rat).